Consider the following 153-residue polypeptide: Small ribosomal subunit protein uS15 (153 aa).

It belongs to the universal ribosomal protein uS15 family. As to quaternary structure, part of the 30S ribosomal subunit.

This is Small ribosomal subunit protein uS15 from Sulfolobus acidocaldarius (strain ATCC 33909 / DSM 639 / JCM 8929 / NBRC 15157 / NCIMB 11770).